The following is a 475-amino-acid chain: Transcription factor EB (475 aa).

Residues 1 to 52 (MASRIGLRMQLMREQAQQEEQRERMQQQAVMHYMQQQQQQQQQLGGPPTPAI) are disordered. Residues 1-166 (MASRIGLRMQ…DDVIDNIMRL (166 aa)) form an interaction with ACSS2 region. Positions 26-43 (QQQAVMHYMQQQQQQQQQ) are enriched in low complexity. 4 positions are modified to phosphoserine: serine 108, serine 113, serine 121, and serine 137. A Nuclear export signal motif is present at residues 135-152 (GNSAPNSPMAMLHISSNP). Serine 141 is modified (phosphoserine; by MTOR). The segment at 155–164 (EFDDVIDNIM) is strong transcription activation domain. The residue at position 182 (threonine 182) is a Phosphothreonine. Serine 210 bears the Phosphoserine; by MTOR mark. Cysteine 211 bears the S-(2,3-dicarboxypropyl)cysteine mark. The bHLH domain maps to 234-287 (QKKDNHNLIERRRRFNINDRIKELGMLIPKANDLDVRWNKGTILKASVDYIRRM). A Nuclear localization signal motif is present at residues 244 to 247 (RRRR). The leucine-zipper stretch occupies residues 297-318 (LENHSRRLEMTNKQLWLRIQEL). Residue serine 331 is modified to Phosphoserine. Residues 351–429 (SEDGPGEALM…HGSPFPNLSK (79 aa)) form a disordered region. The segment covering 380 to 389 (LPSAAQPQSP) has biased composition (low complexity). Residues serine 422, serine 440, serine 465, serine 466, and serine 468 each carry the phosphoserine modification. Residues 445–468 (ASDPLFSTMSPEASKASSRRSSFS) show a composition bias toward low complexity. A disordered region spans residues 445–475 (ASDPLFSTMSPEASKASSRRSSFSMEEGDVL).

It belongs to the MiT/TFE family. As to quaternary structure, homodimer and heterodimer; with TFE3 or MITF. Interacts (when phosphorylated by MTOR) with YWHAZ; promoting retention in the cytosol. Interacts with Irgm1; promoting association between TFEB and PPP3CB and dephosphorylation. Interacts with small GTPases Rag (RagA/RRAGA, RagB/RRAGB, RagC/RRAGC and/or RagD/RRAGD); promoting its recruitment to lysosomal membrane in the presence of nutrients. Interacts with ACSS2. In terms of processing, phosphorylation at Ser-210 by MTOR via non-canonical mTORC1 pathway regulates its subcellular location and activity. When nutrients are present, phosphorylation by MTOR promotes association with 14-3-3/YWHA adapters and retention in the cytosol. Inhibition of mTORC1, starvation and lysosomal disruption, promotes dephosphorylation by calcineurin PPP3CB and translocation to the nucleus. Dephosphorylated by calcineurin PPP3CB in response to lysosomal Ca(2+) release. Irgm1 promotes dephosphorylation by calcineurin PPP3CB, resulting in TFEB nuclear translocation and stimulation of lysosomal biogenesis. Exported from the nucleus in a mTORC1-dependent manner in response to nutrient availability. Post-translationally, alkylated via a non-enzymatic covalent modification. Itaconate, an anti-inflammatory metabolite generated in response to lipopolysaccharide, alkylates Cys-211, preventing association with 14-3-3/YWHA adapters, thereby promoting nuclear translocation and activity. Sumoylated; does not affect dimerization with MITF. Widely expressed.

It is found in the nucleus. It localises to the cytoplasm. The protein localises to the cytosol. Its subcellular location is the lysosome membrane. Transcription factor that acts as a master regulator of lysosomal biogenesis, autophagy, lysosomal exocytosis, lipid catabolism, energy metabolism and immune response. Specifically recognizes and binds E-box sequences (5'-CANNTG-3'); efficient DNA-binding requires dimerization with itself or with another MiT/TFE family member such as TFE3 or MITF. Involved in the cellular response to amino acid availability by acting downstream of MTOR: in the presence of nutrients, TFEB phosphorylation by MTOR promotes its cytosolic retention and subsequent inactivation. Upon starvation or lysosomal stress, inhibition of MTOR induces TFEB dephosphorylation, resulting in nuclear localization and transcription factor activity. Specifically recognizes and binds the CLEAR-box sequence (5'-GTCACGTGAC-3') present in the regulatory region of many lysosomal genes, leading to activate their expression, thereby playing a central role in expression of lysosomal genes. Regulates lysosomal positioning in response to nutrient deprivation by promoting the expression of PIP4P1. Acts as a positive regulator of autophagy by promoting expression of genes involved in autophagy. In association with TFE3, activates the expression of CD40L in T-cells, thereby playing a role in T-cell-dependent antibody responses in activated CD4(+) T-cells and thymus-dependent humoral immunity. Specifically recognizes the gamma-E3 box, a subset of E-boxes, present in the heavy-chain immunoglobulin enhancer. Plays a role in the signal transduction processes required for normal vascularization of the placenta. Involved in the immune response to infection by the bacteria S.aureus, S.typhimurium or S.enterica. Infection promotes itaconate production, leading to alkylation, resulting in nuclear localization and transcription factor activity. Itaconate-mediated alkylation activates TFEB-dependent lysosomal biogenesis, facilitating the bacteria clearance during the antibacterial innate immune response. In association with ACSS2, promotes the expression of genes involved in lysosome biogenesis and both autophagy upon glucose deprivation. The sequence is that of Transcription factor EB from Mus musculus (Mouse).